A 113-amino-acid polypeptide reads, in one-letter code: Kita-kyushu lung cancer antigen 1 (113 aa).

Residues 1 to 3 (MNF) lie on the Cytoplasmic side of the membrane. Residues 4–21 (YLLLASSILCALIVFWKY) traverse the membrane as a helical; Signal-anchor for type II membrane protein segment. The Extracellular segment spans residues 22 to 113 (RRFQRNTGEM…RGASPHRKST (92 aa)). N83 is a glycosylation site (N-linked (GlcNAc...) asparagine).

Specifically expressed in testis. Expressed by cancer cell lines.

It localises to the cell membrane. This is Kita-kyushu lung cancer antigen 1 (CT83) from Homo sapiens (Human).